A 290-amino-acid chain; its full sequence is Prepilin leader peptidase/N-methyltransferase (290 aa).

A helical membrane pass occupies residues 13–33 (AFVLCTILLGLLVGSFLNVVV). 4 residues coordinate Zn(2+): Cys72, Cys75, Cys97, and Cys100. The next 5 helical transmembrane spans lie at 128–148 (FTWQAGAMLLLTWGLLAMSLI), 158–178 (VLVLPLLWLGLIANHFGLFAS), 183–203 (LFGAVFGYLSLWSVFWLFKLV), 228–248 (ILPLTILLSSLVGAILGVIML), and 261–276 (FGPYLAIAGWIALLWG).

This sequence belongs to the peptidase A24 family. The cofactor is Zn(2+).

The protein resides in the cell inner membrane. It carries out the reaction Typically cleaves a -Gly-|-Phe- bond to release an N-terminal, basic peptide of 5-8 residues from type IV prepilin, and then N-methylates the new N-terminal amino group, the methyl donor being S-adenosyl-L-methionine.. Plays an essential role in type IV pili and type II pseudopili formation by proteolytically removing the leader sequence from substrate proteins and subsequently monomethylating the alpha-amino group of the newly exposed N-terminal phenylalanine. Substrates include proteins required for pilus biogenesis PilE, PilV, PilW, and PilX as well as some components of the type II general secretory apparatus GspG, GspH, GspI and GspJ. The chain is Prepilin leader peptidase/N-methyltransferase (pilD) from Pseudomonas aeruginosa (strain ATCC 15692 / DSM 22644 / CIP 104116 / JCM 14847 / LMG 12228 / 1C / PRS 101 / PAO1).